Consider the following 129-residue polypeptide: Glycine cleavage system H protein (129 aa).

The Lipoyl-binding domain occupies 24-106 (LVRIGISAFA…HGEGWLLLVK (83 aa)). An N6-lipoyllysine modification is found at lysine 65.

The protein belongs to the GcvH family. As to quaternary structure, the glycine cleavage system is composed of four proteins: P, T, L and H. (R)-lipoate is required as a cofactor.

Functionally, the glycine cleavage system catalyzes the degradation of glycine. The H protein shuttles the methylamine group of glycine from the P protein to the T protein. The protein is Glycine cleavage system H protein of Prochlorococcus marinus (strain SARG / CCMP1375 / SS120).